Reading from the N-terminus, the 276-residue chain is Glutamate 5-kinase (276 aa).

Lysine 14 is an ATP binding site. Serine 54, aspartate 141, and asparagine 157 together coordinate substrate. ATP-binding positions include 177-178 (SD) and 219-225 (TGGMLTK).

It belongs to the glutamate 5-kinase family.

It is found in the cytoplasm. It catalyses the reaction L-glutamate + ATP = L-glutamyl 5-phosphate + ADP. It functions in the pathway amino-acid biosynthesis; L-proline biosynthesis; L-glutamate 5-semialdehyde from L-glutamate: step 1/2. Functionally, catalyzes the transfer of a phosphate group to glutamate to form L-glutamate 5-phosphate. In Listeria welshimeri serovar 6b (strain ATCC 35897 / DSM 20650 / CCUG 15529 / CIP 8149 / NCTC 11857 / SLCC 5334 / V8), this protein is Glutamate 5-kinase.